Here is a 353-residue protein sequence, read N- to C-terminus: Rhodopsin (353 aa).

At 1 to 36 (MNGTEGPFFYVPMLNTTGIVRSPYDYPQYYLVNPAA) the chain is on the extracellular side. Residues N2 and N15 are each glycosylated (N-linked (GlcNAc...) asparagine). The chain crosses the membrane as a helical span at residues 37–61 (YAALGAYMFLLILLGFPINFLTLYV). The Cytoplasmic portion of the chain corresponds to 62-73 (TIEHKKLRTPLN). Residues 74 to 96 (YILLNLAVANLFMVFGGFTTTMY) traverse the membrane as a helical segment. At 97–110 (TSMHGYFVLGRLGC) the chain is on the extracellular side. C110 and C187 are oxidised to a cystine. A helical transmembrane segment spans residues 111–133 (NLEGFFATLGGEIGLWSLVVLAI). A 'Ionic lock' involved in activated form stabilization motif is present at residues 134–136 (ERW). Residues 134 to 152 (ERWMVVCKPISNFRFGENH) lie on the Cytoplasmic side of the membrane. The helical transmembrane segment at 153–173 (AIMGLAFTWIMACACAVPPLV) threads the bilayer. Residues 174–202 (GWSRYIPEGMQCSCGVDYYTRAEGFNNES) are Extracellular-facing. N200 carries an N-linked (GlcNAc...) asparagine glycan. Residues 203–224 (FVVYMFICHFLIPMAVVFFCYG) form a helical membrane-spanning segment. At 225 to 252 (RLLCAVKEAAAAQQESETTQRAEREVTR) the chain is on the cytoplasmic side. The helical transmembrane segment at 253–274 (MVVIMVVAFLICWLPYAGVAWW) threads the bilayer. Residues 275–286 (IFTHQGSEFGPV) lie on the Extracellular side of the membrane. A helical membrane pass occupies residues 287-308 (FMTIPAFFAKSSSIYNPLIYIC). K296 carries the post-translational modification N6-(retinylidene)lysine. Residues 309–353 (MNKQFRHCMITTLCCGKNPFEEEEGASTTSKTEASSVSSSSVSPA) are Cytoplasmic-facing. S-palmitoyl cysteine attachment occurs at residues C322 and C323. Residues 330 to 353 (EEEGASTTSKTEASSVSSSSVSPA) are disordered. The span at 334–353 (ASTTSKTEASSVSSSSVSPA) shows a compositional bias: low complexity.

This sequence belongs to the G-protein coupled receptor 1 family. Opsin subfamily. Post-translationally, phosphorylated on some or all of the serine and threonine residues present in the C-terminal region. In terms of processing, contains one covalently linked retinal chromophore.

It is found in the membrane. Its subcellular location is the cell projection. It localises to the cilium. The protein resides in the photoreceptor outer segment. Photoreceptor required for image-forming vision at low light intensity. While most salt water fish species use retinal as chromophore, most freshwater fish use 3-dehydroretinal, or a mixture of retinal and 3-dehydroretinal. Light-induced isomerization of 11-cis to all-trans retinal triggers a conformational change that activates signaling via G-proteins. Subsequent receptor phosphorylation mediates displacement of the bound G-protein alpha subunit by arrestin and terminates signaling. In Tetraodon nigroviridis (Spotted green pufferfish), this protein is Rhodopsin (rho).